Reading from the N-terminus, the 361-residue chain is MKILVTGGAGFIGSAVVRHIINNTQDSVVNVDKLTYAGNLESLADVSDSERYAFEHADICDAVAMSRIFAQHQPDAVMHLAAESHVDRSITGPAAFIETNIVGTYVLLEAARNYWSALNDEKKKSFRFHHISTDEVYGDLPHPDEANNNEALPLFTETTAYAPSSPYSASKASSDHLVRAWKRTYGLPTIVTNCSNNYGPYHFPEKLIPLVILNALEGKALPIYGKGDQIRDWLYVEDHARALYTVVTEGKAGETYNIGGHNEKKNIDVVLTICDLLDEIVPKEKSYREQITYVADRPGHDRRYAIDADKISRELGWKPQETFESGIRKTVEWYLANTNWVENVKSGTYQSWIEQNYEGRQ.

NAD(+) contacts are provided by residues 11–12 (FI), 32–35 (DKLT), 58–59 (DI), 80–84 (LAAES), and T99. Substrate is bound at residue S84. Residue T133 coordinates substrate. D134 acts as the Proton donor in catalysis. Active-site proton acceptor residues include E135 and Y167. 167–171 (YSASK) provides a ligand contact to NAD(+). N196 is a binding site for substrate. Position 197 (N197) interacts with NAD(+). Substrate is bound by residues 206-207 (KL), 222-224 (PIY), R231, N266, and 296-300 (DRPGH).

It belongs to the NAD(P)-dependent epimerase/dehydratase family. dTDP-glucose dehydratase subfamily. In terms of assembly, homodimer. The cofactor is NAD(+).

It catalyses the reaction dTDP-alpha-D-glucose = dTDP-4-dehydro-6-deoxy-alpha-D-glucose + H2O. The protein operates within carbohydrate biosynthesis; dTDP-L-rhamnose biosynthesis. It functions in the pathway bacterial outer membrane biogenesis; LPS O-antigen biosynthesis. Catalyzes the dehydration of dTDP-D-glucose to form dTDP-6-deoxy-D-xylo-4-hexulose via a three-step process involving oxidation, dehydration and reduction. The polypeptide is dTDP-glucose 4,6-dehydratase (rfbB) (Shigella flexneri).